We begin with the raw amino-acid sequence, 168 residues long: Desumoylating isopeptidase 1 (168 aa).

A PPPDE domain is found at 7 to 149; sequence YPVKLYVYDL…FGQALRPLLD (143 aa). The active site involves His-38. The Nuclear export signal 1 signature appears at 83 to 91; the sequence is IFLEYLSSL. Cys-108 is an active-site residue. The short motif at 139-153 is the Nuclear export signal 2 element; sequence PFGQALRPLLDSIQI.

Belongs to the DeSI family. Homodimer. Interacts with UBQLN4; leading to the export of UBQLN4 from the nucleus.

The protein resides in the cytoplasm. It is found in the nucleus. The enzyme catalyses S-hexadecanoyl-L-cysteinyl-[protein] + H2O = L-cysteinyl-[protein] + hexadecanoate + H(+). Palmostatin B inhibits its palmitoyl protein thioesterase activity. Protease which deconjugates SUMO1, SUMO2 and SUMO3 from some substrate proteins. Has isopeptidase but not SUMO-processing activity. Desumoylates ZBTB46. Collaborates with UBQLN4 in the export of ubiquitinated proteins from the nucleus to the cytoplasm. Exhibits palmitoyl protein thioesterase (S-depalmitoylation) activity towards synthetic substrates 4-methylumbelliferyl-6-S-palmitoyl-beta-D-glucopyranoside and S-depalmitoylation probe 5 (DPP-5). This is Desumoylating isopeptidase 1 from Homo sapiens (Human).